We begin with the raw amino-acid sequence, 348 residues long: NADH-ubiquinone oxidoreductase chain 2 (348 aa).

A run of 11 helical transmembrane segments spans residues 1–21, 25–45, 60–80, 99–119, 124–144, 151–171, 178–197, 202–224, 239–259, 274–294, and 326–346; these read MNPY…TLTF, HWIL…PLMA, FLIQ…NAWI, MFAL…PEVL, LLTG…LIIQ, PLIL…SGLN, ILAY…IQYA, LIAL…VLSA, ILAA…PLTG, DLPA…FFYL, and LTIS…ILML.

This sequence belongs to the complex I subunit 2 family. As to quaternary structure, core subunit of respiratory chain NADH dehydrogenase (Complex I) which is composed of 45 different subunits.

The protein resides in the mitochondrion inner membrane. It carries out the reaction a ubiquinone + NADH + 5 H(+)(in) = a ubiquinol + NAD(+) + 4 H(+)(out). Functionally, core subunit of the mitochondrial membrane respiratory chain NADH dehydrogenase (Complex I) which catalyzes electron transfer from NADH through the respiratory chain, using ubiquinone as an electron acceptor. Essential for the catalytic activity and assembly of complex I. This is NADH-ubiquinone oxidoreductase chain 2 (mt-nd2) from Danio rerio (Zebrafish).